The sequence spans 1020 residues: 26S proteasome non-ATPase regulatory subunit 1 (1020 aa).

Positions 279-322 (TALPSTFKPQGTTSEDGAKSEGDKSKSDEDITEETPADDKVERT) are disordered. A compositionally biased stretch (polar residues) spans 281-293 (LPSTFKPQGTTSE). Threonine 291 is modified (phosphothreonine). The span at 294–307 (DGAKSEGDKSKSDE) shows a compositional bias: basic and acidic residues. Serine 298, serine 303, and serine 305 each carry phosphoserine. Residue threonine 310 is modified to Phosphothreonine. 10 PC repeats span residues 418-452 (TATA…SSGY), 456-489 (GALY…ENVR), 491-525 (GGCL…VTGE), 526-560 (AAGI…EKIL), 562-595 (GLAV…VLRR), 596-631 (SGMY…DVRR), 632-664 (AAVT…PHVR), 666-701 (GAAM…FVRQ), 702-742 (GALI…DVMA), and 745-777 (GAIL…QAVV). Disordered stretches follow at residues 855 to 950 (QKRR…NPAR) and 999 to 1020 (FGPM…YIED). Composition is skewed to basic and acidic residues over residues 858–867 (RENADKKEDE) and 876–939 (KEGA…KEPE). Residues 1003–1020 (NDEEKEPEPPEPFEYIED) show a composition bias toward acidic residues.

This sequence belongs to the proteasome subunit S1 family.

In terms of biological role, acts as a regulatory subunit of the 26S proteasome which is involved in the ATP-dependent degradation of ubiquitinated proteins. The sequence is that of 26S proteasome non-ATPase regulatory subunit 1 (Rpn2) from Drosophila melanogaster (Fruit fly).